We begin with the raw amino-acid sequence, 500 residues long: Protein C13 (500 aa).

Positions glutamate 27–leucine 89 constitute a BTB domain. Kelch repeat units lie at residues isoleucine 301–asparagine 348, arginine 349–asparagine 395, leucine 397–glycine 440, and tyrosine 441–aspartate 490.

Belongs to the poxviruses Kelch family.

This Swinepox virus (strain Kasza) (SWPV) protein is Protein C13.